Consider the following 249-residue polypeptide: DNA repair protein RecO (249 aa).

It belongs to the RecO family.

Involved in DNA repair and RecF pathway recombination. The polypeptide is DNA repair protein RecO (Polaromonas naphthalenivorans (strain CJ2)).